Here is a 1201-residue protein sequence, read N- to C-terminus: DNA-directed RNA polymerase subunit beta' (1201 aa).

4 residues coordinate Zn(2+): Cys60, Cys62, Cys75, and Cys78. The Mg(2+) site is built by Asp449, Asp451, and Asp453. Cys818, Cys892, Cys899, and Cys902 together coordinate Zn(2+).

The protein belongs to the RNA polymerase beta' chain family. The RNAP catalytic core consists of 2 alpha, 1 beta, 1 beta' and 1 omega subunit. When a sigma factor is associated with the core the holoenzyme is formed, which can initiate transcription. Requires Mg(2+) as cofactor. Zn(2+) serves as cofactor.

It carries out the reaction RNA(n) + a ribonucleoside 5'-triphosphate = RNA(n+1) + diphosphate. DNA-dependent RNA polymerase catalyzes the transcription of DNA into RNA using the four ribonucleoside triphosphates as substrates. In Listeria monocytogenes serotype 4b (strain F2365), this protein is DNA-directed RNA polymerase subunit beta'.